Reading from the N-terminus, the 105-residue chain is NADH-quinone oxidoreductase subunit K (105 aa).

3 helical membrane-spanning segments follow: residues 8–28, 34–54, and 65–85; these read LAAY…GVFL, IILL…LVAF, and VFVF…LAIL.

Belongs to the complex I subunit 4L family. NDH-1 is composed of 14 different subunits. Subunits NuoA, H, J, K, L, M, N constitute the membrane sector of the complex.

It localises to the cell inner membrane. It catalyses the reaction a quinone + NADH + 5 H(+)(in) = a quinol + NAD(+) + 4 H(+)(out). Functionally, NDH-1 shuttles electrons from NADH, via FMN and iron-sulfur (Fe-S) centers, to quinones in the respiratory chain. The immediate electron acceptor for the enzyme in this species is believed to be ubiquinone. Couples the redox reaction to proton translocation (for every two electrons transferred, four hydrogen ions are translocated across the cytoplasmic membrane), and thus conserves the redox energy in a proton gradient. In Acidithiobacillus ferrooxidans (strain ATCC 23270 / DSM 14882 / CIP 104768 / NCIMB 8455) (Ferrobacillus ferrooxidans (strain ATCC 23270)), this protein is NADH-quinone oxidoreductase subunit K.